The primary structure comprises 141 residues: Hemoglobin subunit alpha (141 aa).

Residues 1–141 enclose the Globin domain; sequence VLSEEDKSHV…VSAMLTSKYR (141 aa). Residue His58 participates in O2 binding. His87 is a binding site for heme b.

Belongs to the globin family. As to quaternary structure, heterotetramer of two alpha chains and two beta chains. In terms of tissue distribution, red blood cells.

Its function is as follows. Involved in oxygen transport from the lung to the various peripheral tissues. This chain is Hemoglobin subunit alpha (HBA), found in Caiman crocodilus (Spectacled caiman).